Consider the following 211-residue polypeptide: Uracil phosphoribosyltransferase (211 aa).

5-phospho-alpha-D-ribose 1-diphosphate is bound by residues arginine 81, arginine 106, and 133-141; that span reads DPMLATGNS. Uracil is bound by residues isoleucine 196 and 201-203; that span reads GDA. Aspartate 202 serves as a coordination point for 5-phospho-alpha-D-ribose 1-diphosphate.

This sequence belongs to the UPRTase family. The cofactor is Mg(2+).

It catalyses the reaction UMP + diphosphate = 5-phospho-alpha-D-ribose 1-diphosphate + uracil. Its pathway is pyrimidine metabolism; UMP biosynthesis via salvage pathway; UMP from uracil: step 1/1. Allosterically activated by GTP. Catalyzes the conversion of uracil and 5-phospho-alpha-D-ribose 1-diphosphate (PRPP) to UMP and diphosphate. This is Uracil phosphoribosyltransferase from Paracoccus denitrificans (strain Pd 1222).